The primary structure comprises 214 residues: Probable transaldolase (214 aa).

Catalysis depends on K83, which acts as the Schiff-base intermediate with substrate.

This sequence belongs to the transaldolase family. Type 3B subfamily.

The protein localises to the cytoplasm. It catalyses the reaction D-sedoheptulose 7-phosphate + D-glyceraldehyde 3-phosphate = D-erythrose 4-phosphate + beta-D-fructose 6-phosphate. It participates in carbohydrate degradation; pentose phosphate pathway; D-glyceraldehyde 3-phosphate and beta-D-fructose 6-phosphate from D-ribose 5-phosphate and D-xylulose 5-phosphate (non-oxidative stage): step 2/3. Functionally, transaldolase is important for the balance of metabolites in the pentose-phosphate pathway. This is Probable transaldolase from Desulfosudis oleivorans (strain DSM 6200 / JCM 39069 / Hxd3) (Desulfococcus oleovorans).